The chain runs to 117 residues: Fluoride-specific ion channel FluC 2 (117 aa).

The next 4 membrane-spanning stretches (helical) occupy residues 4–24 (FLIG…GDII), 31–51 (KFPW…GIIT), 59–79 (LSMI…TFMY), and 94–114 (LIYI…GEFI). Gly-69 and Thr-72 together coordinate Na(+).

It belongs to the fluoride channel Fluc/FEX (TC 1.A.43) family.

It localises to the cell membrane. The catalysed reaction is fluoride(in) = fluoride(out). Its activity is regulated as follows. Na(+) is not transported, but it plays an essential structural role and its presence is essential for fluoride channel function. Its function is as follows. Fluoride-specific ion channel. Important for reducing fluoride concentration in the cell, thus reducing its toxicity. In Clostridium acetobutylicum (strain ATCC 824 / DSM 792 / JCM 1419 / IAM 19013 / LMG 5710 / NBRC 13948 / NRRL B-527 / VKM B-1787 / 2291 / W), this protein is Fluoride-specific ion channel FluC 2.